The primary structure comprises 1203 residues: Zinc finger and BTB domain-containing protein 38 (1203 aa).

Residues 33 to 100 (CDVTIIVEDT…IYSSTVVVRR (68 aa)) enclose the BTB domain. A Glycyl lysine isopeptide (Lys-Gly) (interchain with G-Cter in SUMO2) cross-link involves residue K43. S130 is modified (phosphoserine). Glycyl lysine isopeptide (Lys-Gly) (interchain with G-Cter in SUMO2) cross-links involve residues K145, K148, K151, and K260. Positions 230-334 (EAYRSQPLRE…PSETPGPPAA (105 aa)) are disordered. Residues 269 to 280 (TQTQDSDSTTEN) are compositionally biased toward polar residues. The interaction with CBFA2T3 stretch occupies residues 299–522 (PAPILSHSEP…RRYQCIFCLE (224 aa)). Over residues 313-322 (GDVHFPREDE) the composition is skewed to basic and acidic residues. Residues 341–363 (YNCSCCSKSFDSSTLLGAHMQLH) form a C2H2-type 1 zinc finger. The C2H2-type 2; degenerate zinc-finger motif lies at 370-394 (FVCKYCNKQFTTLNRLDRHEQICMR). 3 consecutive C2H2-type zinc fingers follow at residues 459–481 (YSCV…ANVH), 487–509 (YPCH…EIWH), and 515–538 (YQCI…KSFH). Glycyl lysine isopeptide (Lys-Gly) (interchain with G-Cter in SUMO2) cross-links involve residues K549 and K556. 4 stretches are compositionally biased toward polar residues: residues 581-598 (RNSS…NESP), 607-628 (LPSS…TSSP), 635-644 (PSWQGTPTSA), and 731-741 (SNHQSPSQPVA). 2 disordered regions span residues 581–644 (RNSS…PTSA) and 731–776 (SNHQ…VPCN). Positions 747-757 (KDSKPEADKAS) are enriched in basic and acidic residues. Residues K750, K755, K796, K806, K813, K834, K842, and K849 each participate in a glycyl lysine isopeptide (Lys-Gly) (interchain with G-Cter in SUMO2) cross-link. Disordered regions lie at residues 857-882 (KPKY…SPLG) and 895-914 (FDEV…YYNY). A compositionally biased stretch (basic and acidic residues) spans 866-877 (TLPRESDPETRG). Glycyl lysine isopeptide (Lys-Gly) (interchain with G-Cter in SUMO2) cross-links involve residues K915, K971, K976, K984, K988, K998, K1024, and K1033. 5 C2H2-type zinc fingers span residues 1017 to 1039 (YICE…MRCH), 1045 to 1067 (YQCK…ERIH), 1073 to 1095 (FICQ…ERIH), 1101 to 1123 (YHCQ…ERRH), and 1132 to 1154 (FACF…QKKH). Glycyl lysine isopeptide (Lys-Gly) (interchain with G-Cter in SUMO2) cross-links involve residues K1116, K1139, K1142, K1157, and K1190. A disordered region spans residues 1172-1203 (NSDLLESQPCTDSEDSDQKDDIKKPLLKMSFE).

In terms of assembly, interacts with CBFA2T3, ZBTB4 and RBBP6. In terms of processing, ubiquitinated by RBBP6; leading to its degradation by the proteasome. Widely expressed throughout the adult brain where it is found mainly in neurons. Also expressed in the adrenal medulla. Not detected in non-neural tissues including heart, spleen, liver and muscle. In the embryo, expressed in the developing brain and spinal cord but not in the migratory neural crest. Also expressed in the limbs, transiently in somites, and in the embryonic liver. In the embryonic neural tube, expression is restricted to late postmitotic neurons.

The protein localises to the nucleus. The protein resides in the chromosome. Its function is as follows. Transcriptional regulator with bimodal DNA-binding specificity. Binds with a higher affinity to methylated CpG dinucleotides in the consensus sequence 5'-CGCG-3' but can also bind to E-box elements (5'-CACGTG-3'). Can also bind specifically to a single methyl-CpG pair. Represses transcription in a methyl-CpG-dependent manner. Plays an important role in regulating DNA-replication and common fragile sites (CFS) stability in a RBBP6- and MCM10-dependent manner; represses expression of MCM10 which plays an important role in DNA-replication. Acts as a transcriptional activator. May be involved in the differentiation and/or survival of late postmitotic neurons. This is Zinc finger and BTB domain-containing protein 38 from Rattus norvegicus (Rat).